A 199-amino-acid chain; its full sequence is MEDAAAPGRTEGVLERQGAPPAAGQGGALVELTPTPGGLALVSPYHTHRAGDPLDLVALAEQVQKADEFIRANATNKLTVIAEQIQHLQEQARKVLEDAHRDANLHHVACNIVKKPGNIYYLYKRESGQQYFSIISPKEWGTSCPHDFLGAYKLQHDLSWTPYEDIEKQDAKISMMDTLLSQSVALPPCTEPNFQGLTH.

The tract at residues methionine 1–valine 30 is disordered. Residues arginine 71–arginine 101 adopt a coiled-coil conformation.

This is an uncharacterized protein from Homo sapiens (Human).